We begin with the raw amino-acid sequence, 282 residues long: MTKILYGNEVALKIKEDLNLRIDKLKEKNIIPKLAILRMGNKPDDIAYERSIIKSCEKLNIETKVEELNEDILEEDFLKLMESLNNEKEIHGILVFRPYPKHLNENTINSSIALNKDVDCMHPLNLERIFEGDLNQFVPCTPEAVIEILKYYDIDLKGKNIVIINRSMVVGKPLSMMVLSNNATVTICHSKTIDLPSITKKADIVVTAIGKAKLIKEEYFNEDSIVMDVSINVDENGKLCGDVDFENVKEKVGAITPVPKGVGSVTTTLLLKHIVDAAERNS.

NADP(+)-binding positions include 165–167 (NRS), Ser190, and Ile231.

The protein belongs to the tetrahydrofolate dehydrogenase/cyclohydrolase family. In terms of assembly, homodimer.

The enzyme catalyses (6R)-5,10-methylene-5,6,7,8-tetrahydrofolate + NADP(+) = (6R)-5,10-methenyltetrahydrofolate + NADPH. The catalysed reaction is (6R)-5,10-methenyltetrahydrofolate + H2O = (6R)-10-formyltetrahydrofolate + H(+). The protein operates within one-carbon metabolism; tetrahydrofolate interconversion. Catalyzes the oxidation of 5,10-methylenetetrahydrofolate to 5,10-methenyltetrahydrofolate and then the hydrolysis of 5,10-methenyltetrahydrofolate to 10-formyltetrahydrofolate. This Clostridium botulinum (strain Kyoto / Type A2) protein is Bifunctional protein FolD.